The primary structure comprises 569 residues: MKITSRELTDIFQKHVENLFPNKELKPVEITVATNENFGDYQCNFAMINSKIIGDNPRKIAEEVKNNFPYGDVIEKLEVAGPGFINIFLSDKYISNSIKKIGEDYDFSFLNRKGKVIIDFSSPNIAKRMHIGHLRSTIIGESISRIYRFLGYDVVADNHIGDWGTQFGKLIVGYRNWLDKKAYKKNAIEELERVYVKFSDEAEKDPSLEDLARAELKKVQDGEEENTKLWKEFITESLKEYNKLYKRLDVHFDTYYGESFYNDMMADVVKELVDKKIAVDDDGAKVVFFDEKDNLFPCIVQKKDGAYLYSTSDIATVKFRKNTYDVNRMIYLTDARQQDHFKQFFKITDMLGWNIEKYHIWFGIIRFADGILSTRKGNVIKLEELLDEAHSRAYDVVNEKNPNLSEGEKQNIAEVVGVSSVKYADLSQNKQSDIIFEWDKMLSFEGNTAPYLLYTYARIQSILRKVAELNIGLNENIEIKTENKIEKSLATYLLAFPISVLKAGETFKPNLIADYLYELSKKLNSFYNNCPILNQDIETLKSRALLIKKTGEVLKEGLELLGIPILNKM.

Positions 123–133 (PNIAKRMHIGH) match the 'HIGH' region motif.

Belongs to the class-I aminoacyl-tRNA synthetase family. In terms of assembly, monomer.

It localises to the cytoplasm. It catalyses the reaction tRNA(Arg) + L-arginine + ATP = L-arginyl-tRNA(Arg) + AMP + diphosphate. The sequence is that of Arginine--tRNA ligase from Fusobacterium nucleatum subsp. nucleatum (strain ATCC 25586 / DSM 15643 / BCRC 10681 / CIP 101130 / JCM 8532 / KCTC 2640 / LMG 13131 / VPI 4355).